The chain runs to 39 residues: MKKQRNPHLISKNYKGIPIGFNLNLNRTAIKRIQDTREK.

This is an uncharacterized protein from Dictyostelium discoideum (Social amoeba).